Reading from the N-terminus, the 903-residue chain is Protein translocase subunit SecA (903 aa).

ATP contacts are provided by residues Q89, G107 to T111, and D502. C887, C889, C898, and H899 together coordinate Zn(2+).

This sequence belongs to the SecA family. Monomer and homodimer. Part of the essential Sec protein translocation apparatus which comprises SecA, SecYEG and auxiliary proteins SecDF-YajC and YidC. Zn(2+) serves as cofactor.

Its subcellular location is the cell inner membrane. It is found in the cytoplasm. The enzyme catalyses ATP + H2O + cellular proteinSide 1 = ADP + phosphate + cellular proteinSide 2.. Functionally, part of the Sec protein translocase complex. Interacts with the SecYEG preprotein conducting channel. Has a central role in coupling the hydrolysis of ATP to the transfer of proteins into and across the cell membrane, serving both as a receptor for the preprotein-SecB complex and as an ATP-driven molecular motor driving the stepwise translocation of polypeptide chains across the membrane. The polypeptide is Protein translocase subunit SecA (Jannaschia sp. (strain CCS1)).